Consider the following 360-residue polypeptide: C-X-C chemokine receptor type 2 (360 aa).

Topologically, residues 1 to 48 (MEDFNMESDSFEDFWKGEDLSNYSYSSTLPPFLLDAAPCEPESLEINK) are extracellular. Residue asparagine 22 is glycosylated (N-linked (GlcNAc...) asparagine). A helical membrane pass occupies residues 49–75 (YFVVIIYALVFLLSLLGNSLVMLVILY). The Cytoplasmic segment spans residues 76–84 (SRVGRSVTD). Residues 85-105 (VYLLNLALADLLFALTLPIWA) form a helical membrane-spanning segment. Over 106–120 (ASKVNGWIFGTFLCK) the chain is Extracellular. An intrachain disulfide couples cysteine 119 to cysteine 196. A helical membrane pass occupies residues 121 to 142 (VVSLLKEVNFYSGILLLACISV). Topologically, residues 143-163 (DRYLAIVHATRTLTQKRYLVK) are cytoplasmic. The chain crosses the membrane as a helical span at residues 164 to 183 (FICLSIWGLSLLLALPVLLF). The Extracellular portion of the chain corresponds to 184-208 (RRTVYSSNVSPACYEDMGNNTANWR). A helical membrane pass occupies residues 209–231 (MLLRILPQSFGFIVPLLIMLFCY). Topologically, residues 232 to 251 (GFTLRTLFKAHMGQKHRAMR) are cytoplasmic. A helical transmembrane segment spans residues 252 to 273 (VIFAVVLIFLLCWLPYNLVLLA). The Extracellular segment spans residues 274 to 294 (DTLMRTQVIQETCERRNHIDR). Residues 295–315 (ALDATEILGILHSCLNPLIYA) traverse the membrane as a helical segment. The Cytoplasmic segment spans residues 316–360 (FIGQKFRHGLLKILAIHGLISKDSLPKDSRPSFVGSSSGHTSTTL). A phosphoserine mark is found at serine 347, serine 351, serine 352, and serine 353.

It belongs to the G-protein coupled receptor 1 family. Interacts with IL8. Interacts with GNAI2. Post-translationally, phosphorylated upon ligand binding; which is required for desensitization. (Microbial infection) Proteolytically cleaved by Staphylococcus aureus staphopain A/SspP. This cleavage inhibits CXCR2-dependent neutrophil activation and chemotaxis.

It is found in the cell membrane. Receptor for interleukin-8 which is a powerful neutrophil chemotactic factor. Binding of IL-8 to the receptor causes activation of neutrophils. This response is mediated via a G-protein that activates a phosphatidylinositol-calcium second messenger system. Binds to IL-8 with high affinity. Also binds with high affinity to CXCL3, GRO/MGSA and NAP-2. The protein is C-X-C chemokine receptor type 2 (CXCR2) of Homo sapiens (Human).